The primary structure comprises 732 residues: uncharacterized protein (732 aa).

The 228-residue stretch at 163 to 390 folds into the TR mART core domain; that stretch reads YYTINELNYL…FGIVAKKKYE (228 aa). Residues arginine 285, serine 309, and glutamate 354 contribute to the active site.

This is an uncharacterized protein from Acanthamoeba polyphaga mimivirus (APMV).